A 156-amino-acid polypeptide reads, in one-letter code: Small ribosomal subunit protein uS7 (156 aa).

This sequence belongs to the universal ribosomal protein uS7 family. In terms of assembly, part of the 30S ribosomal subunit. Contacts proteins S9 and S11.

Functionally, one of the primary rRNA binding proteins, it binds directly to 16S rRNA where it nucleates assembly of the head domain of the 30S subunit. Is located at the subunit interface close to the decoding center, probably blocks exit of the E-site tRNA. In Metamycoplasma arthritidis (strain 158L3-1) (Mycoplasma arthritidis), this protein is Small ribosomal subunit protein uS7.